The following is a 154-amino-acid chain: MAL-like protein (154 aa).

4 helical membrane passes run 24 to 44 (LFLT…FWVW), 61 to 81 (VLYV…SYLF), 99 to 119 (GTTG…TIIS), and 131 to 151 (VAAS…AFSI). Residues 24-154 (LFLTIPFAFF…ILHAFSIYYH (131 aa)) form the MARVEL domain.

This sequence belongs to the MAL family.

It is found in the membrane. The sequence is that of MAL-like protein (Mall) from Mus musculus (Mouse).